A 414-amino-acid chain; its full sequence is Carboxyl-terminal-processing protease (414 aa).

The N-terminal stretch at M1–A29 is a signal peptide. In terms of domain architecture, PDZ spans Y100 to P184. Active-site charge relay system residues include S310, D321, and K335.

Belongs to the peptidase S41A family.

Its subcellular location is the cellular thylakoid lumen. It catalyses the reaction The enzyme shows specific recognition of a C-terminal tripeptide, Xaa-Yaa-Zaa, in which Xaa is preferably Ala or Leu, Yaa is preferably Ala or Tyr, and Zaa is preferably Ala, but then cleaves at a variable distance from the C-terminus. A typical cleavage is -Ala-Ala-|-Arg-Ala-Ala-Lys-Glu-Asn-Tyr-Ala-Leu-Ala-Ala.. In terms of biological role, cleavage of the 16 C-terminal residues from the D1 precursor of photosystem II (PSII). This proteolytic processing is necessary to allow the light-driven assembly of the oxygen-evolving cluster (a tetranuclear manganese), which is responsible for photosynthetic water oxidation. The sequence is that of Carboxyl-terminal-processing protease (ctpA) from Picosynechococcus sp. (strain ATCC 27264 / PCC 7002 / PR-6) (Agmenellum quadruplicatum).